Here is a 326-residue protein sequence, read N- to C-terminus: Pyruvate dehydrogenase E1 component subunit beta (326 aa).

Residue Glu62 coordinates thiamine diphosphate.

Heterodimer of an alpha and a beta chain. Thiamine diphosphate is required as a cofactor.

It catalyses the reaction N(6)-[(R)-lipoyl]-L-lysyl-[protein] + pyruvate + H(+) = N(6)-[(R)-S(8)-acetyldihydrolipoyl]-L-lysyl-[protein] + CO2. In terms of biological role, the pyruvate dehydrogenase complex catalyzes the overall conversion of pyruvate to acetyl-CoA and CO(2). It contains multiple copies of three enzymatic components: pyruvate dehydrogenase (E1), dihydrolipoamide acetyltransferase (E2) and lipoamide dehydrogenase (E3). This chain is Pyruvate dehydrogenase E1 component subunit beta (pdhB), found in Mycoplasma genitalium (strain ATCC 33530 / DSM 19775 / NCTC 10195 / G37) (Mycoplasmoides genitalium).